A 321-amino-acid polypeptide reads, in one-letter code: L-lactate dehydrogenase (321 aa).

Residues Val19, Asp40, Lys45, Tyr71, and 85-86 (GA) each bind NAD(+). Substrate contacts are provided by residues Gln88, Arg94, and 126–129 (NPVD). NAD(+) is bound by residues 124–126 (ATN) and Ser149. Substrate is bound at residue 154 to 157 (DTAR). Arg159 and His174 together coordinate beta-D-fructose 1,6-bisphosphate. The Proton acceptor role is filled by His181. Tyr226 is modified (phosphotyrosine). Thr235 contributes to the substrate binding site.

It belongs to the LDH/MDH superfamily. LDH family. Homotetramer.

The protein localises to the cytoplasm. The catalysed reaction is (S)-lactate + NAD(+) = pyruvate + NADH + H(+). Its pathway is fermentation; pyruvate fermentation to lactate; (S)-lactate from pyruvate: step 1/1. With respect to regulation, allosterically activated by fructose 1,6-bisphosphate (FBP). Its function is as follows. Catalyzes the conversion of lactate to pyruvate. In Oceanobacillus iheyensis (strain DSM 14371 / CIP 107618 / JCM 11309 / KCTC 3954 / HTE831), this protein is L-lactate dehydrogenase.